The primary structure comprises 160 residues: ATP synthase subunit delta, mitochondrial (160 aa).

The transit peptide at 1-22 (MFRQSLRSIARTRTGTIGVRTY) directs the protein to the mitochondrion.

As to quaternary structure, F-type ATP synthases have 2 components, the catalytic core F(1) and the membrane-embedded component F(0), linked together by a central stalk and a peripheral stalk. The central stalk, also called rotor shaft, is often seen as part of F(1). The peripheral stalk is seen as part of F(0). F(0) contains the membrane channel next to the rotor. F-type ATP synthases form dimers but each monomer functions independently in ATP generation. The dimer consists of 18 different polypeptides: ATP1 (subunit alpha, part of F(1), 3 molecules per monomer), ATP2 (subunit beta, part of F(1), 3 molecules per monomer), ATP3 (subunit gamma, part of the central stalk), ATP4 (subunit b, part of the peripheral stalk), ATP5/OSCP (subunit 5/OSCP, part of the peripheral stalk), ATP6 (subunit a, part of the peripheral stalk), ATP7 (subunit d, part of the peripheral stalk), ATP8 (subunit 8, part of the peripheral stalk), OLI1 (subunit c, part of the rotor, 10 molecules per monomer), ATP14 (subunit h, part of the peripheral stalk), ATP15 (subunit epsilon, part of the central stalk), ATP16 (subunit delta, part of the central stalk), ATP17 (subunit f, part of the peripheral stalk), ATP18 (subunit i/j, part of the peripheral stalk). Dimer-specific subunits are ATP19 (subunit k, at interface between monomers), ATP20 (subunit g, at interface between monomers), TIM11 (subunit e, at interface between monomers). Also contains subunit L.

The protein resides in the mitochondrion inner membrane. Functionally, mitochondrial membrane ATP synthase (F(1)F(0) ATP synthase or Complex V) produces ATP from ADP in the presence of a proton gradient across the membrane which is generated by electron transport complexes of the respiratory chain. F-type ATP synthases consist of two structural domains, F(1) - containing the extramembraneous catalytic core, and F(0) - containing the membrane proton channel, linked together by a central stalk and a peripheral stalk. During catalysis, ATP synthesis in the catalytic domain of F(1) is coupled via a rotary mechanism of the central stalk subunits to proton translocation. Part of the complex F(1) domain and the central stalk which is part of the complex rotary element. Rotation of the central stalk against the surrounding alpha/ATP1(3)beta/ATP2(3) subunits leads to hydrolysis of ATP in three separate catalytic sites on the beta/ATP2 subunits. This Pichia angusta (Yeast) protein is ATP synthase subunit delta, mitochondrial.